Reading from the N-terminus, the 153-residue chain is Transcriptional repressor NrdR (153 aa).

Residues cysteine 3 to cysteine 34 fold into a zinc finger. The region spanning proline 49 to glutamine 139 is the ATP-cone domain.

This sequence belongs to the NrdR family. It depends on Zn(2+) as a cofactor.

Its function is as follows. Negatively regulates transcription of bacterial ribonucleotide reductase nrd genes and operons by binding to NrdR-boxes. The polypeptide is Transcriptional repressor NrdR (Sorangium cellulosum (strain So ce56) (Polyangium cellulosum (strain So ce56))).